A 427-amino-acid polypeptide reads, in one-letter code: MSVKWEKQEGNVGKLTFEIEQEKVKEGLDRAFVKVRKTLNVPGFRKGKVPRQIFNQRFGEEALYQDALDILLPEVYSQAIDEAGIDPVDTPQVNIESMEKGETWVLTADVTVKPEVKLGDYKGLEVEKRETELTTEELEAELKQLQERQAELVVKEDAPAENGDTVILDFEGFKDGVAFEGGQAENHSLELGSGQFIPGFEEKLVGLKAGDEADIELTFPEEYHAEDLAGQPVVFKVKLHEIKTKEVPALDDELAKDIDEEVETLDELKEKISKRLQEAKEDSVAQAKQEEVIAKAVENAEVDIPHAMVHHEADHLMNHFAQDLQAQGLTPELYYQFTGQTEEAMHAQMEKDAEKRVKMNLVLEAIAEAENIEPTEEAIDEEISTLAEKYGMEKDAVRAALGDMSELKSDLKIRKAIDVLLDSAVEK.

Residues 163–248 (GDTVILDFEG…LHEIKTKEVP (86 aa)) form the PPIase FKBP-type domain.

The protein belongs to the FKBP-type PPIase family. Tig subfamily.

The protein localises to the cytoplasm. It catalyses the reaction [protein]-peptidylproline (omega=180) = [protein]-peptidylproline (omega=0). In terms of biological role, involved in protein export. Acts as a chaperone by maintaining the newly synthesized protein in an open conformation. Functions as a peptidyl-prolyl cis-trans isomerase. The chain is Trigger factor from Listeria innocua serovar 6a (strain ATCC BAA-680 / CLIP 11262).